A 357-amino-acid polypeptide reads, in one-letter code: Dual-specificity RNA methyltransferase RlmN (357 aa).

E89 serves as the catalytic Proton acceptor. Residues 109–340 form the Radical SAM core domain; that stretch reads EREKYTVCVS…CTIRESKALD (232 aa). A disulfide bridge links C116 with C345. Residues C123, C127, and C130 each contribute to the [4Fe-4S] cluster site. S-adenosyl-L-methionine contacts are provided by residues 173–174, S203, 226–228, and N302; these read GE and SLH. Residue C345 is the S-methylcysteine intermediate of the active site.

This sequence belongs to the radical SAM superfamily. RlmN family. It depends on [4Fe-4S] cluster as a cofactor.

Its subcellular location is the cytoplasm. It carries out the reaction adenosine(2503) in 23S rRNA + 2 reduced [2Fe-2S]-[ferredoxin] + 2 S-adenosyl-L-methionine = 2-methyladenosine(2503) in 23S rRNA + 5'-deoxyadenosine + L-methionine + 2 oxidized [2Fe-2S]-[ferredoxin] + S-adenosyl-L-homocysteine. It catalyses the reaction adenosine(37) in tRNA + 2 reduced [2Fe-2S]-[ferredoxin] + 2 S-adenosyl-L-methionine = 2-methyladenosine(37) in tRNA + 5'-deoxyadenosine + L-methionine + 2 oxidized [2Fe-2S]-[ferredoxin] + S-adenosyl-L-homocysteine. Functionally, specifically methylates position 2 of adenine 2503 in 23S rRNA and position 2 of adenine 37 in tRNAs. m2A2503 modification seems to play a crucial role in the proofreading step occurring at the peptidyl transferase center and thus would serve to optimize ribosomal fidelity. This is Dual-specificity RNA methyltransferase RlmN from Helicobacter pylori (strain ATCC 700392 / 26695) (Campylobacter pylori).